The following is a 433-amino-acid chain: Bifunctional protein GlmU (433 aa).

A pyrophosphorylase region spans residues 1-226 (MLSVIILAAG…EECFLGVNSQ (226 aa)). Residues 7–10 (LAAG), lysine 21, and 80–81 (GT) contribute to the UDP-N-acetyl-alpha-D-glucosamine site. Aspartate 106 provides a ligand contact to Mg(2+). The UDP-N-acetyl-alpha-D-glucosamine site is built by glycine 138, glutamate 152, asparagine 167, and asparagine 224. Asparagine 224 serves as a coordination point for Mg(2+). The linker stretch occupies residues 227 to 247 (TERAKAEEIMLERLRKNAMDL). Positions 248–433 (GVVMQLPSSI…NGYFKFFKKP (186 aa)) are N-acetyltransferase. Arginine 311 and lysine 328 together coordinate UDP-N-acetyl-alpha-D-glucosamine. Residue histidine 339 is the Proton acceptor of the active site. UDP-N-acetyl-alpha-D-glucosamine is bound by residues tyrosine 342 and asparagine 353. Acetyl-CoA-binding positions include alanine 356, 362 to 363 (NY), serine 381, serine 399, and arginine 416.

In the N-terminal section; belongs to the N-acetylglucosamine-1-phosphate uridyltransferase family. This sequence in the C-terminal section; belongs to the transferase hexapeptide repeat family. Homotrimer. Mg(2+) serves as cofactor.

Its subcellular location is the cytoplasm. It catalyses the reaction alpha-D-glucosamine 1-phosphate + acetyl-CoA = N-acetyl-alpha-D-glucosamine 1-phosphate + CoA + H(+). The enzyme catalyses N-acetyl-alpha-D-glucosamine 1-phosphate + UTP + H(+) = UDP-N-acetyl-alpha-D-glucosamine + diphosphate. It functions in the pathway nucleotide-sugar biosynthesis; UDP-N-acetyl-alpha-D-glucosamine biosynthesis; N-acetyl-alpha-D-glucosamine 1-phosphate from alpha-D-glucosamine 6-phosphate (route II): step 2/2. Its pathway is nucleotide-sugar biosynthesis; UDP-N-acetyl-alpha-D-glucosamine biosynthesis; UDP-N-acetyl-alpha-D-glucosamine from N-acetyl-alpha-D-glucosamine 1-phosphate: step 1/1. The protein operates within bacterial outer membrane biogenesis; LPS lipid A biosynthesis. In terms of biological role, catalyzes the last two sequential reactions in the de novo biosynthetic pathway for UDP-N-acetylglucosamine (UDP-GlcNAc). The C-terminal domain catalyzes the transfer of acetyl group from acetyl coenzyme A to glucosamine-1-phosphate (GlcN-1-P) to produce N-acetylglucosamine-1-phosphate (GlcNAc-1-P), which is converted into UDP-GlcNAc by the transfer of uridine 5-monophosphate (from uridine 5-triphosphate), a reaction catalyzed by the N-terminal domain. The polypeptide is Bifunctional protein GlmU (Helicobacter pylori (strain HPAG1)).